A 122-amino-acid polypeptide reads, in one-letter code: Urocortin (122 aa).

The N-terminal stretch at 1–25 is a signal peptide; sequence MIQRGRATLLVALLLLAQLRPESSQ. Positions 26 to 80 are excised as a propeptide; the sequence is WSPAAAAATGVQDPNLRWSPGVRNQGGGVRALLLLLAERFPRRAGSEPAGERQRR. Residue Val-120 is modified to Valine amide.

This sequence belongs to the sauvagine/corticotropin-releasing factor/urotensin I family. As to quaternary structure, interacts with CRHR1 and CRHR2 (via their N-terminal extracellular domain). In the organ of Corti, detected in the inner hair cell region (at protein level). Expressed in skin (at protein level).

Its subcellular location is the secreted. In terms of biological role, acts in vitro to stimulate the secretion of adrenocorticotropic hormone (ACTH). Binds with high affinity to CRF receptor types 1, 2-alpha, and 2-beta. Plays a role in the establishment of normal hearing thresholds. Reduces food intake and regulates ghrelin levels in gastric body and plasma. The sequence is that of Urocortin (Ucn) from Mus musculus (Mouse).